The chain runs to 237 residues: N-(5'-phosphoribosyl)anthranilate isomerase (237 aa).

This sequence belongs to the TrpF family.

The catalysed reaction is N-(5-phospho-beta-D-ribosyl)anthranilate = 1-(2-carboxyphenylamino)-1-deoxy-D-ribulose 5-phosphate. The protein operates within amino-acid biosynthesis; L-tryptophan biosynthesis; L-tryptophan from chorismate: step 3/5. This chain is N-(5'-phosphoribosyl)anthranilate isomerase, found in Desulfitobacterium hafniense (strain DSM 10664 / DCB-2).